Consider the following 233-residue polypeptide: UPF0502 protein YpsIP31758_2048 (233 aa).

The protein belongs to the UPF0502 family.

The protein is UPF0502 protein YpsIP31758_2048 of Yersinia pseudotuberculosis serotype O:1b (strain IP 31758).